We begin with the raw amino-acid sequence, 91 residues long: Cell division topological specificity factor (91 aa).

This sequence belongs to the MinE family.

Prevents the cell division inhibition by proteins MinC and MinD at internal division sites while permitting inhibition at polar sites. This ensures cell division at the proper site by restricting the formation of a division septum at the midpoint of the long axis of the cell. The polypeptide is Cell division topological specificity factor (Thermoanaerobacter pseudethanolicus (strain ATCC 33223 / 39E) (Clostridium thermohydrosulfuricum)).